The chain runs to 430 residues: 3-phosphoshikimate 1-carboxyvinyltransferase (430 aa).

3-phosphoshikimate is bound by residues lysine 23, serine 24, and arginine 28. Residue lysine 23 participates in phosphoenolpyruvate binding. Positions 95 and 123 each coordinate phosphoenolpyruvate. 3-phosphoshikimate is bound by residues serine 169, glutamine 171, aspartate 315, and lysine 342. Residue glutamine 171 coordinates phosphoenolpyruvate. Aspartate 315 serves as the catalytic Proton acceptor. Phosphoenolpyruvate-binding residues include arginine 346 and arginine 388.

It belongs to the EPSP synthase family. As to quaternary structure, monomer.

It localises to the cytoplasm. The enzyme catalyses 3-phosphoshikimate + phosphoenolpyruvate = 5-O-(1-carboxyvinyl)-3-phosphoshikimate + phosphate. Its pathway is metabolic intermediate biosynthesis; chorismate biosynthesis; chorismate from D-erythrose 4-phosphate and phosphoenolpyruvate: step 6/7. Its function is as follows. Catalyzes the transfer of the enolpyruvyl moiety of phosphoenolpyruvate (PEP) to the 5-hydroxyl of shikimate-3-phosphate (S3P) to produce enolpyruvyl shikimate-3-phosphate and inorganic phosphate. This Streptococcus pyogenes serotype M3 (strain ATCC BAA-595 / MGAS315) protein is 3-phosphoshikimate 1-carboxyvinyltransferase.